The sequence spans 849 residues: DNA mismatch repair protein MutS (849 aa).

602–609 (GPNMSGKS) is a binding site for ATP.

This sequence belongs to the DNA mismatch repair MutS family.

In terms of biological role, this protein is involved in the repair of mismatches in DNA. It is possible that it carries out the mismatch recognition step. This protein has a weak ATPase activity. The polypeptide is DNA mismatch repair protein MutS (Streptococcus sanguinis (strain SK36)).